The chain runs to 133 residues: Alpha-amylase inhibitor/endochitinase (133 aa).

Glu30 serves as the catalytic Proton donor.

The protein belongs to the glycosyl hydrolase 19 family. Chitinase class I subfamily.

It carries out the reaction Random endo-hydrolysis of N-acetyl-beta-D-glucosaminide (1-&gt;4)-beta-linkages in chitin and chitodextrins.. Its function is as follows. This protein functions both as an alpha-amylase inhibitor and as a chitinase. In Coix lacryma-jobi (Job's tears), this protein is Alpha-amylase inhibitor/endochitinase.